An 86-amino-acid polypeptide reads, in one-letter code: UPF0125 protein bbp_234 (86 aa).

Belongs to the UPF0125 (RnfH) family.

The chain is UPF0125 protein bbp_234 from Buchnera aphidicola subsp. Baizongia pistaciae (strain Bp).